The chain runs to 655 residues: Epithelial sodium channel subunit alpha (655 aa).

Over 1–55 the chain is Cytoplasmic; the sequence is MTDKEEEAEGGKKKEPMIGFYDSYQELFEFFCNNTTIHGTIRMVCSKHNNMKTVS. A helical membrane pass occupies residues 56 to 76; the sequence is WTILFITTFGVMYWQFGLLLG. The Extracellular portion of the chain corresponds to 77 to 531; it reads QYYSYPVSIT…SQWSLWFGSS (455 aa). Cystine bridges form between C102/C275, C199/C206, C252/C259, C364/C448, C385/C425, C385/C444, C389/C440, C398/C425, C398/C448, and C400/C414. A helical transmembrane segment spans residues 532-552; sequence VLSVVEMGELVFDLIAVGVIV. Over 553–655 the chain is Cytoplasmic; that stretch reads LRRRRREKCQ…QEASEGPTVL (103 aa). A disordered region spans residues 561–587; that stretch reads CQASSDGEGTSDSTAGTHRGQENASRS. Positions 562–586 are enriched in polar residues; sequence QASSDGEGTSDSTAGTHRGQENASR.

Belongs to the amiloride-sensitive sodium channel (TC 1.A.6) family. SCNN1A subfamily. In terms of assembly, heterotrimer; containing an alpha/SCNN1A, a beta/SCNN1B and a gamma/SCNN1G subunit. Strongly expressed in gill, kidney and rectum (at protein level). More weakly expressed in muscle, brain, heart, liver and intestine.

Its subcellular location is the apical cell membrane. It localises to the cell projection. The protein localises to the cilium. It is found in the cytoplasmic granule. The protein resides in the cytoplasm. Its subcellular location is the cytoplasmic vesicle. It localises to the secretory vesicle. The protein localises to the acrosome. It is found in the flagellum. The catalysed reaction is Na(+)(in) = Na(+)(out). With respect to regulation, originally identified and characterized by its inhibition by the diuretic drug amiloride. Its function is as follows. This is one of the three pore-forming subunits of the heterotrimeric epithelial sodium channel (ENaC), a critical regulator of sodium balance and fluid homeostasis. ENaC operates in epithelial tissues, where it mediates the electrodiffusion of sodium ions from extracellular fluid through the apical membrane of cells, with water following osmotically. In Neoceratodus forsteri (Australian lungfish), this protein is Epithelial sodium channel subunit alpha (scnn1a).